A 214-amino-acid chain; its full sequence is Ribosomal RNA small subunit methyltransferase G (214 aa).

Residues Gly-77, Phe-82, 128-129 (VE), and Arg-143 each bind S-adenosyl-L-methionine.

This sequence belongs to the methyltransferase superfamily. RNA methyltransferase RsmG family.

The protein resides in the cytoplasm. The catalysed reaction is guanosine(527) in 16S rRNA + S-adenosyl-L-methionine = N(7)-methylguanosine(527) in 16S rRNA + S-adenosyl-L-homocysteine. Its function is as follows. Specifically methylates the N7 position of guanine in position 527 of 16S rRNA. This Nitrosomonas europaea (strain ATCC 19718 / CIP 103999 / KCTC 2705 / NBRC 14298) protein is Ribosomal RNA small subunit methyltransferase G.